Consider the following 337-residue polypeptide: D-alanine--D-alanine ligase (337 aa).

The ATP-grasp domain maps to 124-330 (KMWFSALGIP…FTEYLSLVIN (207 aa)). 154 to 209 (ALAQWGSIFVKAASQGSSVGCYKVDDSDKVAGVLKDAFGYAPYVIVEKTIKARELE) contacts ATP. Mg(2+) is bound by residues aspartate 284, glutamate 297, and asparagine 299.

Belongs to the D-alanine--D-alanine ligase family. Mg(2+) serves as cofactor. It depends on Mn(2+) as a cofactor.

Its subcellular location is the cytoplasm. It carries out the reaction 2 D-alanine + ATP = D-alanyl-D-alanine + ADP + phosphate + H(+). The protein operates within cell wall biogenesis; peptidoglycan biosynthesis. Cell wall formation. The polypeptide is D-alanine--D-alanine ligase (Shewanella baltica (strain OS195)).